The chain runs to 193 residues: ATP-dependent Clp protease proteolytic subunit 1 (193 aa).

Ser-98 serves as the catalytic Nucleophile. Residue His-123 is part of the active site.

The protein belongs to the peptidase S14 family. Fourteen ClpP subunits assemble into 2 heptameric rings which stack back to back to give a disk-like structure with a central cavity, resembling the structure of eukaryotic proteasomes.

It is found in the cytoplasm. It catalyses the reaction Hydrolysis of proteins to small peptides in the presence of ATP and magnesium. alpha-casein is the usual test substrate. In the absence of ATP, only oligopeptides shorter than five residues are hydrolyzed (such as succinyl-Leu-Tyr-|-NHMec, and Leu-Tyr-Leu-|-Tyr-Trp, in which cleavage of the -Tyr-|-Leu- and -Tyr-|-Trp bonds also occurs).. Cleaves peptides in various proteins in a process that requires ATP hydrolysis. Has a chymotrypsin-like activity. Plays a major role in the degradation of misfolded proteins. The polypeptide is ATP-dependent Clp protease proteolytic subunit 1 (Bacillus cereus (strain ZK / E33L)).